The following is a 427-amino-acid chain: Enolase (427 aa).

Residue Q163 coordinates (2R)-2-phosphoglycerate. The Proton donor role is filled by E205. Mg(2+)-binding residues include D242, E283, and D310. Residues K335, R364, S365, and K386 each coordinate (2R)-2-phosphoglycerate. K335 serves as the catalytic Proton acceptor.

The protein belongs to the enolase family. The cofactor is Mg(2+).

The protein localises to the cytoplasm. It localises to the secreted. It is found in the cell surface. It catalyses the reaction (2R)-2-phosphoglycerate = phosphoenolpyruvate + H2O. It functions in the pathway carbohydrate degradation; glycolysis; pyruvate from D-glyceraldehyde 3-phosphate: step 4/5. In terms of biological role, catalyzes the reversible conversion of 2-phosphoglycerate (2-PG) into phosphoenolpyruvate (PEP). It is essential for the degradation of carbohydrates via glycolysis. This is Enolase from Salinispora arenicola (strain CNS-205).